Here is a 361-residue protein sequence, read N- to C-terminus: Caspase activity and apoptosis inhibitor 1 (361 aa).

The span at 1 to 14 shows a compositional bias: basic residues; the sequence is MTGKKSSREKRRKR. 2 disordered regions span residues 1 to 28 and 67 to 100; these read MTGK…APDI and GGSG…GSLQ. Residues 19 to 28 show a composition bias toward low complexity; sequence AAAALAAPDI. Residue Ser-89 is modified to Phosphoserine. Phosphothreonine is present on Thr-90. A Glycyl lysine isopeptide (Lys-Gly) (interchain with G-Cter in SUMO2) cross-link involves residue Lys-104. Phosphoserine occurs at positions 120 and 203. Disordered regions lie at residues 198–218 and 230–331; these read DNGM…MGSD and ASSV…DVQP. Positions 199–210 are enriched in acidic residues; sequence NGMDSDMEEEAD. Positions 234-251 are enriched in basic and acidic residues; it reads RENKQPEGLELKQGKGED. Residues 272 to 281 show a composition bias toward low complexity; sequence EEAAAPEAPE. Residues 281-311 are a coiled coil; it reads ENTVQSEAGQIDDLEKDIEKSVNEILGLAES. Ser-312 is subject to Phosphoserine.

In terms of tissue distribution, ubiquitous.

In terms of biological role, anti-apoptotic protein that modulates a caspase-10 dependent mitochondrial caspase-3/9 feedback amplification loop. In Homo sapiens (Human), this protein is Caspase activity and apoptosis inhibitor 1 (CAAP1).